Consider the following 555-residue polypeptide: Chaperonin GroEL (555 aa).

Residues 29-32 (TLGP), lysine 50, 86-90 (DGTTT), glycine 418, and aspartate 499 each bind ATP. Positions 528–555 (HEEDNNTGNRSGGGVGGGHHGGMGGMDF) are disordered. Residues 537–555 (RSGGGVGGGHHGGMGGMDF) are compositionally biased toward gly residues.

The protein belongs to the chaperonin (HSP60) family. Forms a cylinder of 14 subunits composed of two heptameric rings stacked back-to-back. Interacts with the co-chaperonin GroES.

It localises to the cytoplasm. It catalyses the reaction ATP + H2O + a folded polypeptide = ADP + phosphate + an unfolded polypeptide.. Its function is as follows. Together with its co-chaperonin GroES, plays an essential role in assisting protein folding. The GroEL-GroES system forms a nano-cage that allows encapsulation of the non-native substrate proteins and provides a physical environment optimized to promote and accelerate protein folding. This is Chaperonin GroEL from Orientia tsutsugamushi (strain Ikeda) (Rickettsia tsutsugamushi).